The primary structure comprises 330 residues: Stearoyl-CoA desaturase 5 (330 aa).

The Cytoplasmic portion of the chain corresponds to 1–49 (MPGPATDAGKIPFCDAKEEIRAGLESSEGGGGPERPGARGQRQNIVWRN). N49 serves as a coordination point for substrate. The chain crosses the membrane as a helical span at residues 50-70 (VVLMSLLHLGAVYSLVLIPKA). Topologically, residues 71 to 72 (KP) are lumenal. Residues 73-93 (LTLLWAYFCFLLAALGVTAGA) traverse the membrane as a helical segment. The Fe cation site is built by H94 and H99. Residues 94–99 (HRLWSH) carry the Histidine box-1 motif. The Cytoplasmic segment spans residues 94-193 (HRLWSHRSYR…VVRIQRKYYK (100 aa)). Positions 122, 129, and 130 each coordinate substrate. H131, H134, and H135 together coordinate Fe cation. The Histidine box-2 signature appears at 131–135 (HRAHH). Substrate-binding residues include R162 and K163. A helical transmembrane segment spans residues 194-214 (ISVVLMCFVVPTLVPWYIWGE). A topological domain (lumenal) is located at residue S215. A helical membrane pass occupies residues 216 to 238 (LWNSYFLASILRYTISLNISWLV). W236 contacts substrate. The Cytoplasmic portion of the chain corresponds to 239 to 330 (NSAAHMYGNR…RKARTGDSSA (92 aa)). H243, H272, H275, and H276 together coordinate Fe cation. The Histidine box-3 motif lies at 272–276 (HNYHH).

Belongs to the fatty acid desaturase type 1 family. As to quaternary structure, may self-associate and form homodimers. Fe(2+) is required as a cofactor. In terms of tissue distribution, detected in fetal brain, and at lower levels in fetal kidney. Detected in adult brain and pancreas, and at lower levels in kidney and lung. Expressed in spiral ganglion cells and the organ of Corti of fetal cochlea.

Its subcellular location is the endoplasmic reticulum membrane. The enzyme catalyses octadecanoyl-CoA + 2 Fe(II)-[cytochrome b5] + O2 + 2 H(+) = (9Z)-octadecenoyl-CoA + 2 Fe(III)-[cytochrome b5] + 2 H2O. It catalyses the reaction hexadecanoyl-CoA + 2 Fe(II)-[cytochrome b5] + O2 + 2 H(+) = (9Z)-hexadecenoyl-CoA + 2 Fe(III)-[cytochrome b5] + 2 H2O. In terms of biological role, stearoyl-CoA desaturase that utilizes O(2) and electrons from reduced cytochrome b5 to introduce the first double bond into saturated fatty acyl-CoA substrates. Catalyzes the insertion of a cis double bond at the delta-9 position into fatty acyl-CoA substrates including palmitoyl-CoA and stearoyl-CoA. Gives rise to a mixture of 16:1 and 18:1 unsaturated fatty acids. Involved in neuronal cell proliferation and differentiation through down-regulation of EGFR/AKT/MAPK and Wnt signaling pathways. In Homo sapiens (Human), this protein is Stearoyl-CoA desaturase 5 (SCD5).